The following is a 1043-amino-acid chain: Non-canonical nonribosomal peptide synthetase cpsA (1043 aa).

Residues 41–386 are adenylation (A) domain; it reads RRAQENPSAP…IGGDGVSPGY (346 aa). The region spanning 549–626 is the Carrier domain; it reads QDASTTISRL…QMARYVDEGG (78 aa). Ser-586 is subject to O-(pantetheine 4'-phosphoryl)serine. Residues 671 to 914 form a short-chain dehydrogenase/reductase (R) domain region; the sequence is MTGATGFVGA…FVPVDYLVDA (244 aa). Residues 672-915 enclose the Thioester reductase (TE) domain; sequence TGATGFVGAF…VPVDYLVDAI (244 aa).

This sequence belongs to the NRP synthetase family. The cofactor is pantetheine 4'-phosphate.

The catalysed reaction is L-valine + ATP + NADPH + H(+) = L-valinal + AMP + diphosphate + NADP(+). It carries out the reaction L-tryptophan + ATP + NADPH + H(+) = L-tryptophanal + AMP + diphosphate + NADP(+). The protein operates within alkaloid biosynthesis. Non-canonical nonribosomal peptide synthetase; part of the gene cluster that mediates the biosynthesis of campesine G, a dimeric indole piperazine alkaloid that shows good insecticidal activity Galleria mellonella. CpsA catalyzes the first steps of the pathway by producing L-tryptophanal and L-valinal from their respective amino-acids. These products condensate spontaneously to form trypyl-valyl pyrazine also known as didehydrocampesine A. The NmrA-like family domain-containing oxidoreductase cpsB is the next enzyme in cps pathway and reduces the unstable didehydrocampesine A to campesine A. The methyltransferase cpsF and the acetyltransferase cpsE both recognize N13 of piperazine ring to carry out methylation and acetylation of campesine A to produce campesine C and B, respectively. The cytochrome P450 monooxygenase cpsD then acts as a dimerase that catalyzes oxidative heterocoupling between campesine B and C to produce heterodimers with unexpected 6/5/6/6/6/6/5/6 eight-ring scaffold called campesine D. Finally,the cytochrome P450 monooxygenase cpsC is a regioselective dehydrogenase that catalyzes dehydrogenation reaction towards C2-N1 to produce campesine G. This is Non-canonical nonribosomal peptide synthetase cpsA from Aspergillus campestris (strain IBT 28561).